The following is a 524-amino-acid chain: Bifunctional purine biosynthesis protein PurH (524 aa).

The MGS-like domain maps to 1-144; sequence MVRRALVSVS…KNAAHVGVVV (144 aa).

Belongs to the PurH family.

The catalysed reaction is (6R)-10-formyltetrahydrofolate + 5-amino-1-(5-phospho-beta-D-ribosyl)imidazole-4-carboxamide = 5-formamido-1-(5-phospho-D-ribosyl)imidazole-4-carboxamide + (6S)-5,6,7,8-tetrahydrofolate. It carries out the reaction IMP + H2O = 5-formamido-1-(5-phospho-D-ribosyl)imidazole-4-carboxamide. It participates in purine metabolism; IMP biosynthesis via de novo pathway; 5-formamido-1-(5-phospho-D-ribosyl)imidazole-4-carboxamide from 5-amino-1-(5-phospho-D-ribosyl)imidazole-4-carboxamide (10-formyl THF route): step 1/1. Its pathway is purine metabolism; IMP biosynthesis via de novo pathway; IMP from 5-formamido-1-(5-phospho-D-ribosyl)imidazole-4-carboxamide: step 1/1. This chain is Bifunctional purine biosynthesis protein PurH, found in Anaeromyxobacter sp. (strain Fw109-5).